The sequence spans 179 residues: Large ribosomal subunit protein uL5 (179 aa).

It belongs to the universal ribosomal protein uL5 family. Part of the 50S ribosomal subunit; part of the 5S rRNA/L5/L18/L25 subcomplex. Contacts the 5S rRNA and the P site tRNA. Forms a bridge to the 30S subunit in the 70S ribosome.

This is one of the proteins that bind and probably mediate the attachment of the 5S RNA into the large ribosomal subunit, where it forms part of the central protuberance. In the 70S ribosome it contacts protein S13 of the 30S subunit (bridge B1b), connecting the 2 subunits; this bridge is implicated in subunit movement. Contacts the P site tRNA; the 5S rRNA and some of its associated proteins might help stabilize positioning of ribosome-bound tRNAs. The chain is Large ribosomal subunit protein uL5 from Lysinibacillus sphaericus (strain C3-41).